A 146-amino-acid polypeptide reads, in one-letter code: Flavodoxin (146 aa).

Positions Ala4–Leu143 constitute a Flavodoxin-like domain.

It belongs to the flavodoxin family. FMN is required as a cofactor.

Functionally, electron-transfer proteins that function in various electron transport systems in microorganisms. Functionally interchangeable with ferredoxin. The polypeptide is Flavodoxin (Megalodesulfovibrio gigas (strain ATCC 19364 / DSM 1382 / NCIMB 9332 / VKM B-1759) (Desulfovibrio gigas)).